The sequence spans 487 residues: Protein nucleotidyltransferase YdiU (487 aa).

8 residues coordinate ATP: Gly90, Gly92, Arg93, Lys113, Asp125, Gly126, Arg176, and Arg183. Asp252 functions as the Proton acceptor in the catalytic mechanism. 2 residues coordinate Mg(2+): Asn253 and Asp262. Residue Asp262 participates in ATP binding.

Belongs to the SELO family. Mg(2+) serves as cofactor. Mn(2+) is required as a cofactor.

The enzyme catalyses L-seryl-[protein] + ATP = 3-O-(5'-adenylyl)-L-seryl-[protein] + diphosphate. It carries out the reaction L-threonyl-[protein] + ATP = 3-O-(5'-adenylyl)-L-threonyl-[protein] + diphosphate. It catalyses the reaction L-tyrosyl-[protein] + ATP = O-(5'-adenylyl)-L-tyrosyl-[protein] + diphosphate. The catalysed reaction is L-histidyl-[protein] + UTP = N(tele)-(5'-uridylyl)-L-histidyl-[protein] + diphosphate. The enzyme catalyses L-seryl-[protein] + UTP = O-(5'-uridylyl)-L-seryl-[protein] + diphosphate. It carries out the reaction L-tyrosyl-[protein] + UTP = O-(5'-uridylyl)-L-tyrosyl-[protein] + diphosphate. Its function is as follows. Nucleotidyltransferase involved in the post-translational modification of proteins. It can catalyze the addition of adenosine monophosphate (AMP) or uridine monophosphate (UMP) to a protein, resulting in modifications known as AMPylation and UMPylation. The polypeptide is Protein nucleotidyltransferase YdiU (Pseudomonas fluorescens (strain ATCC BAA-477 / NRRL B-23932 / Pf-5)).